Reading from the N-terminus, the 174-residue chain is MEGFTIWLTGPSGAGKTTLAVKLAKKLREMGYKVEILDGDTIRKTLYPNLGFSKEAREMHNRIVIYMAKLLTRNGVIAIVSLISPYKRIREYARKEIGRFMEVYVYAPLEVRIKRDPKGLYAKAIRGEIRGLTGYDGVYEEPENPEVKVDSSRMTPDEEAELVIRKAKELGYLP.

10–17 (GPSGAGKT) contacts ATP. Catalysis depends on Ser84, which acts as the Phosphoserine intermediate.

It belongs to the APS kinase family.

It carries out the reaction adenosine 5'-phosphosulfate + ATP = 3'-phosphoadenylyl sulfate + ADP + H(+). It functions in the pathway sulfur metabolism; hydrogen sulfide biosynthesis; sulfite from sulfate: step 2/3. Catalyzes the synthesis of activated sulfate. The protein is Probable adenylyl-sulfate kinase (cysC) of Pyrococcus abyssi (strain GE5 / Orsay).